The sequence spans 276 residues: Shikimate dehydrogenase (NADP(+)) (276 aa).

Shikimate is bound by residues 18–20 and Thr-65; that span reads SKS. The active-site Proton acceptor is the Lys-69. Glu-81 contacts NADP(+). Residues Asn-90 and Asp-106 each coordinate shikimate. NADP(+)-binding positions include 130-134, 154-159, and Met-217; these read GAGGA and NRTSSK. Tyr-219 provides a ligand contact to shikimate. NADP(+) is bound at residue Gly-241.

Belongs to the shikimate dehydrogenase family. Homodimer.

It catalyses the reaction shikimate + NADP(+) = 3-dehydroshikimate + NADPH + H(+). Its pathway is metabolic intermediate biosynthesis; chorismate biosynthesis; chorismate from D-erythrose 4-phosphate and phosphoenolpyruvate: step 4/7. In terms of biological role, involved in the biosynthesis of the chorismate, which leads to the biosynthesis of aromatic amino acids. Catalyzes the reversible NADPH linked reduction of 3-dehydroshikimate (DHSA) to yield shikimate (SA). The chain is Shikimate dehydrogenase (NADP(+)) from Vibrio atlanticus (strain LGP32) (Vibrio splendidus (strain Mel32)).